The following is a 78-amino-acid chain: Small venom protein 2 (78 aa).

The first 19 residues, 1-19 (MKFIVLLGALLALLVAVSA), serve as a signal peptide directing secretion. Residues 20 to 42 (DRIAREAPEMESVDEAVLTRQAR) constitute a propeptide that is removed on maturation.

As to expression, expressed by the venom gland.

It is found in the secreted. The polypeptide is Small venom protein 2 (Pimpla hypochondriaca (Parasitoid wasp)).